The following is a 673-amino-acid chain: Polyunsaturated fatty acid 5-lipoxygenase (673 aa).

Residues 2 to 117 (PSYTVTVATG…EIVLRDGRAK (116 aa)) enclose the PLAT domain. Residues G17, T18, D19, N44, D45, E47, D79, and D80 each coordinate Ca(2+). In terms of domain architecture, Lipoxygenase spans 118–673 (LARDDQIHIL…PDRIPNSVAI (556 aa)). A Phosphoserine modification is found at S271. Fe cation contacts are provided by H367 and H372. The residue at position 523 (S523) is a Phosphoserine. Positions 550, 554, and 673 each coordinate Fe cation.

Belongs to the lipoxygenase family. In terms of assembly, homodimer. Interacts with ALOX5AP and LTC4S. Interacts with COTL1, the interaction is required for stability and efficient catalytic activity. Interacts with PIK3R1; this interaction bridges ALOX5 with CD40 after CD40 ligation in B cells and leads to the production of reactive oxygen species (ROS). Interacts (via PLAT domain) with DICER1 (via Dicer dsRNA-binding fold domain); this interaction enhances arachidonate 5-lipoxygenase activity and modifies the miRNA precursor processing activity of DICER1. The cofactor is Fe cation. Post-translationally, serine phosphorylation by MAPKAPK2 is stimulated by arachidonic acid. Phosphorylation on Ser-523 by PKA has an inhibitory effect. Phosphorylation on Ser-271 prevents export from the nucleus. Phosphorylation at Ser-523 is stimulated by 8-bromo-3',5'-cyclic AMP or prostaglandin E2.

It localises to the cytoplasm. It is found in the nucleus matrix. Its subcellular location is the nucleus membrane. The protein localises to the perinuclear region. The protein resides in the cytosol. It localises to the nucleus envelope. It is found in the nucleus intermembrane space. It carries out the reaction (5Z,8Z,11Z,14Z)-eicosatetraenoate + O2 = leukotriene A4 + H2O. The enzyme catalyses 18-HEPE + O2 = (5S)-hydroperoxy-18-hydroxy-(7E,9E,11Z,14Z,16E)-eicosapentaenoate. It catalyses the reaction (18R)-hydroxy-(5Z,8Z,11Z,14Z,16E)-eicosapentaenoate + O2 = (5S)-hydroperoxy-(18R)-hydroxy-(6E,8Z,11Z,14Z,16E)-eicosapentaenoate. The catalysed reaction is (18S)-hydroxy-(5Z,8Z,11Z,14Z,16E)-eicosapentaenoate + O2 = (5S)-hydroperoxy-(18S)-hydroxy-(6E,8Z,11Z,14Z,16E)-eicosapentaenoate. It carries out the reaction (5S)-hydroperoxy-(18S)-hydroxy-(6E,8Z,11Z,14Z,16E)-eicosapentaenoate = (5S,6S)-epoxy-(18S)-hydroxy-(7E,9E,11Z,14Z,16E)-eicosapentaenoate + H2O. The enzyme catalyses (5S)-hydroperoxy-(18R)-hydroxy-(6E,8Z,11Z,14Z,16E)-eicosapentaenoate = (5S,6S)-epoxy-(18R)-hydroxy-(7E,9E,11Z,14Z,16E)-eicosapentaenoate + H2O. It catalyses the reaction (5S)-hydroperoxy-18-hydroxy-(7E,9E,11Z,14Z,16E)-eicosapentaenoate = (5S,6S)-epoxy-18-hydroxy-(7E,9E,11Z,14Z,16E)-eicosapentaenoate + H2O. The catalysed reaction is (5Z,8Z,11Z,14Z)-eicosatetraenoate + O2 = (5S)-hydroperoxy-(6E,8Z,11Z,14Z)-eicosatetraenoate. It carries out the reaction (15S)-hydroxy-(5Z,8Z,11Z,13E)-eicosatetraenoate + O2 = (5S)-hydroperoxy-(15S)-hydroxy-(6E,8Z,11Z,13E)-eicosatetraenoate. The enzyme catalyses (5S)-hydroperoxy-(6E,8Z,11Z,14Z)-eicosatetraenoate = leukotriene A4 + H2O. It catalyses the reaction (5Z,8Z,11Z,14Z)-eicosatetraenoate + O2 = (8S)-hydroperoxy-(5Z,9E,11Z,14Z)-eicosatetraenoate. The catalysed reaction is (5Z,8Z,11Z,14Z)-eicosatetraenoate + O2 = (12S)-hydroperoxy-(5Z,8Z,10E,14Z)-eicosatetraenoate. It carries out the reaction (5Z,8Z)-eicosadienoate + O2 = (5S)-hydroperoxy-(6E,8Z)-eicosadienoate. The enzyme catalyses (12S)-hydroxy-(5Z,8Z,10E,14Z)-eicosatetraenoate + O2 = (5S)-hydroperoxy-(12S)-hydroxy-(6E,8Z,10E,14Z)-eicosatetraenoate. It catalyses the reaction (5Z,8Z,11Z,14Z,17Z)-eicosapentaenoate + O2 = 5-hydroperoxy-(6E,8Z,11Z,14Z,17Z)-eicosapentaenoate. The catalysed reaction is (4Z,7Z,10Z,13Z,16Z,19Z)-docosahexaenoate + O2 = (14S)-hydroperoxy-(4Z,7Z,10Z,12E,16Z,19Z)-docosahexaenoate. It carries out the reaction (4Z,7Z,10Z,13Z,16Z,19Z)-docosahexaenoate + O2 = (7S)-hydroperoxy-(4Z,8E,10Z,13Z,16Z,19Z)-docosahexaenoate. The enzyme catalyses (4Z,7Z,10Z,13Z,16Z,19Z)-docosahexaenoate + O2 = (17S)-hydroperoxy-(4Z,7Z,10Z,13Z,15E,19Z)-docosahexaenoate. It functions in the pathway lipid metabolism; leukotriene A4 biosynthesis. Its function is as follows. Catalyzes the oxygenation of arachidonate to 5-hydroperoxyeicosatetraenoate (5-HPETE) followed by the dehydration to 5,6- epoxyeicosatetraenoate (Leukotriene A4/LTA4), the first two steps in the biosynthesis of leukotrienes, which are potent mediators of inflammation. Also catalyzes the oxygenation of arachidonate into 8-hydroperoxyicosatetraenoate (8-HPETE) and 12-hydroperoxyicosatetraenoate (12-HPETE). Displays lipoxin synthase activity being able to convert (15S)-HETE into a conjugate tetraene. Although arachidonate is the preferred substrate, this enzyme can also metabolize oxidized fatty acids derived from arachidonate such as (15S)-HETE, eicosapentaenoate (EPA) such as (18R)- and (18S)-HEPE or docosahexaenoate (DHA) which lead to the formation of specialized pro-resolving mediators (SPM) lipoxin and resolvins E and D respectively, therefore it participates in anti-inflammatory responses. Oxidation of DHA directly inhibits endothelial cell proliferation and sprouting angiogenesis via peroxisome proliferator-activated receptor gamma (PPARgamma). It does not catalyze the oxygenation of linoleic acid and does not convert (5S)-HETE to lipoxin isomers. In addition to inflammatory processes, it participates in dendritic cell migration, wound healing through an antioxidant mechanism based on heme oxygenase-1 (HO-1) regulation expression, monocyte adhesion to the endothelium via ITGAM expression on monocytes. Moreover, it helps establish an adaptive humoral immunity by regulating primary resting B cells and follicular helper T cells and participates in the CD40-induced production of reactive oxygen species (ROS) after CD40 ligation in B cells through interaction with PIK3R1 that bridges ALOX5 with CD40. May also play a role in glucose homeostasis, regulation of insulin secretion and palmitic acid-induced insulin resistance via AMPK. Can regulate bone mineralization and fat cell differentiation increases in induced pluripotent stem cells. This Mesocricetus auratus (Golden hamster) protein is Polyunsaturated fatty acid 5-lipoxygenase.